Consider the following 80-residue polypeptide: Cell division activator CedA (80 aa).

The protein belongs to the CedA family.

In terms of biological role, activates the cell division inhibited by chromosomal DNA over-replication. The chain is Cell division activator CedA from Salmonella arizonae (strain ATCC BAA-731 / CDC346-86 / RSK2980).